The following is a 37-amino-acid chain: Large ribosomal subunit protein bL36c (37 aa).

It belongs to the bacterial ribosomal protein bL36 family.

It is found in the plastid. It localises to the chloroplast. The polypeptide is Large ribosomal subunit protein bL36c (Chara vulgaris (Common stonewort)).